Here is a 465-residue protein sequence, read N- to C-terminus: UDP-glucose:undecaprenyl-phosphate glucose-1-phosphate transferase (465 aa).

5 helical membrane-spanning segments follow: residues 23–43 (FSDI…NDYF), 46–66 (LHYV…GGIT), 82–102 (ILIL…VTLF), 105–125 (FDLT…GFVV), and 280–300 (IIVS…IATA).

It belongs to the bacterial sugar transferase family.

The protein localises to the cell inner membrane. It carries out the reaction di-trans,octa-cis-undecaprenyl phosphate + UDP-alpha-D-glucose = alpha-D-glucosyl di-trans,octa-cis-undecaprenyl diphosphate + UMP. Its pathway is capsule biogenesis; capsule polysaccharide biosynthesis. Functionally, is likely the initiating enzyme for the K2 capsular polysaccharide synthesis. Catalyzes the transfer of the glucose-1-phosphate moiety from UDP-Glc onto the carrier lipid undecaprenyl phosphate (C55-P), forming a phosphoanhydride bond yielding to glucosyl-pyrophosphoryl-undecaprenol (Glc-PP-C55). The polypeptide is UDP-glucose:undecaprenyl-phosphate glucose-1-phosphate transferase (Klebsiella pneumoniae).